Here is a 309-residue protein sequence, read N- to C-terminus: Probable 3-hydroxyacyl-CoA dehydrogenase B0272.3 (309 aa).

This sequence belongs to the 3-hydroxyacyl-CoA dehydrogenase family. Homodimer.

The protein localises to the mitochondrion matrix. The catalysed reaction is a (3S)-3-hydroxyacyl-CoA + NAD(+) = a 3-oxoacyl-CoA + NADH + H(+). Its pathway is lipid metabolism; fatty acid beta-oxidation. This is Probable 3-hydroxyacyl-CoA dehydrogenase B0272.3 from Caenorhabditis elegans.